The primary structure comprises 383 residues: MGSIGAASMEFCFDVFKELKVHHANDNMLYSPFAILSTLAMVFLGAKDSTRTQINKVVHFDKLPGFGDSIEAQCGTSVNVHSSLRDILNQITKQNDAYSFSLASRLYAQETYTVVPEYLQCVKELYRGGLESVNFQTAADQARGLINAWVESQTNGIIRNILQPSSVDSQTAMVLVNAIAFKGLWEKAFKAEDTQTIPFRVTEQESKPVQMMYQIGSFKVASMASEKMKILELPFASGTMSMLVLLPDDVSGLEQLESIISFEKLTEWTSSSIMEERKVKVYLPRMKMEEKYNLTSLLMAMGITDLFSSSANLSGISSVGSLKISQAVHAAHAEINEAGRDVVGSAEAGVDATEEFRADHPFLFCVKHIETNAILLFGRCVSP.

At Gly2 the chain carries N-acetylglycine. A signal peptide (not cleaved) is located at residues 22 to 48; the sequence is HHANDNMLYSPFAILSTLAMVFLGAKD. The residue at position 69 (Ser69) is a Phosphoserine. Residues Cys74 and Cys121 are joined by a disulfide bond. 2 N-linked (GlcNAc...) asparagine glycosylation sites follow: Asn293 and Asn312. Ser345 carries the phosphoserine modification.

This sequence belongs to the serpin family. Ov-serpin subfamily. In terms of processing, the signal sequence is not cleaved. The functional signal for membrane translocation of ovalbumin becomes accessible when the nascent chain is 50 to 60 residues long. The hydrophobic sequence which lies between residues 27 and 43 folds back on the preceding residues to form an amphipathic hairpin structure which is the signal element recognized by the membrane. Major protein of egg white.

The protein localises to the secreted. Its function is as follows. Storage protein of egg white. Lack protease inhibitory activity. This is Ovalbumin (SERPINB14) from Coturnix japonica (Japanese quail).